A 289-amino-acid chain; its full sequence is MASTKEIRSKIKSVQNTRKITKAMEMVAASKMRRAQERMRNARPYAEKIREIVANLSKANPGFRPAYMATREVKKVGTILVTTDKGLCGGLNTNVLRLIANQVRDLQEKNIEIAYTAIGSKGLQFLNRSKAKLISQTIQIGDIPHMDVLIGAIVSQLEAFERGEIDAVYLAYTRFVNAMKQEPVLEKLLPLESEALTPQEKTGNSWDYICEPDAESILNGLLKRYVEAMIYQAVAENMASEQSARMVSMKAASDNAKNVIGELQLDYNKTRQAAITKELSEIVGGAAAV.

It belongs to the ATPase gamma chain family. As to quaternary structure, F-type ATPases have 2 components, CF(1) - the catalytic core - and CF(0) - the membrane proton channel. CF(1) has five subunits: alpha(3), beta(3), gamma(1), delta(1), epsilon(1). CF(0) has three main subunits: a, b and c.

Its subcellular location is the cell inner membrane. In terms of biological role, produces ATP from ADP in the presence of a proton gradient across the membrane. The gamma chain is believed to be important in regulating ATPase activity and the flow of protons through the CF(0) complex. The polypeptide is ATP synthase gamma chain (Polynucleobacter necessarius subsp. necessarius (strain STIR1)).